A 375-amino-acid polypeptide reads, in one-letter code: Homoserine O-succinyltransferase (375 aa).

The region spanning 48–358 is the AB hydrolase-1 domain; sequence NAVLVCHALS…PAGHDSFLLD (311 aa). The Nucleophile role is filled by serine 154. Arginine 224 is a substrate binding site. Catalysis depends on residues aspartate 319 and histidine 352. Aspartate 353 contributes to the substrate binding site.

This sequence belongs to the AB hydrolase superfamily. MetX family. As to quaternary structure, homodimer.

The protein localises to the cytoplasm. It catalyses the reaction L-homoserine + succinyl-CoA = O-succinyl-L-homoserine + CoA. It functions in the pathway amino-acid biosynthesis; L-methionine biosynthesis via de novo pathway; O-succinyl-L-homoserine from L-homoserine: step 1/1. In terms of biological role, transfers a succinyl group from succinyl-CoA to L-homoserine, forming succinyl-L-homoserine. The sequence is that of Homoserine O-succinyltransferase from Azoarcus sp. (strain BH72).